The chain runs to 136 residues: MLDQLTLCLLLNFLCANVLANTSVFNPCVSQNELSEYEAHQVMENWPVPPIDRAYKCFLTCVLLDLGLIDERGNVQIDKYMKSGVVDWQWVAIELVTCRIEFSDERDLCELSYGIFNCFKDVKLAAEKYVSISNAK.

The signal sequence occupies residues 1–20; it reads MLDQLTLCLLLNFLCANVLA. 3 cysteine pairs are disulfide-bonded: C28–C61, C57–C109, and C98–C118.

It belongs to the PBP/GOBP family.

Functionally, present in the aqueous fluid surrounding olfactory sensory dendrites and are thought to aid in the capture and transport of hydrophobic odorants into and through this fluid. The polypeptide is General odorant-binding protein 57e (Drosophila melanogaster (Fruit fly)).